The sequence spans 215 residues: UPF0502 protein YceH (215 aa).

Lysine 80 carries the N6-acetyllysine modification.

The protein belongs to the UPF0502 family.

This is UPF0502 protein YceH from Shigella flexneri serotype 5b (strain 8401).